A 371-amino-acid polypeptide reads, in one-letter code: Chorismate synthase (371 aa).

Residues Arg48 and Arg54 each coordinate NADP(+). FMN-binding positions include 125–127 (RSS), 238–239 (NA), Gly278, 293–297 (KPTSS), and Arg319.

This sequence belongs to the chorismate synthase family. Homotetramer. FMNH2 is required as a cofactor.

It carries out the reaction 5-O-(1-carboxyvinyl)-3-phosphoshikimate = chorismate + phosphate. The protein operates within metabolic intermediate biosynthesis; chorismate biosynthesis; chorismate from D-erythrose 4-phosphate and phosphoenolpyruvate: step 7/7. Its function is as follows. Catalyzes the anti-1,4-elimination of the C-3 phosphate and the C-6 proR hydrogen from 5-enolpyruvylshikimate-3-phosphate (EPSP) to yield chorismate, which is the branch point compound that serves as the starting substrate for the three terminal pathways of aromatic amino acid biosynthesis. This reaction introduces a second double bond into the aromatic ring system. This Polynucleobacter asymbioticus (strain DSM 18221 / CIP 109841 / QLW-P1DMWA-1) (Polynucleobacter necessarius subsp. asymbioticus) protein is Chorismate synthase.